Here is a 500-residue protein sequence, read N- to C-terminus: Glycerol kinase (500 aa).

Thr-13 serves as a coordination point for ADP. Residues Thr-13, Thr-14, and Ser-15 each coordinate ATP. Thr-13 is a binding site for sn-glycerol 3-phosphate. Arg-17 is an ADP binding site. Residues Arg-83, Glu-84, Tyr-135, and Asp-244 each contribute to the sn-glycerol 3-phosphate site. Glycerol is bound by residues Arg-83, Glu-84, Tyr-135, Asp-244, and Gln-245. ADP-binding residues include Thr-266 and Gly-309. ATP contacts are provided by Thr-266, Gly-309, Gln-313, and Gly-410. 2 residues coordinate ADP: Gly-410 and Asn-414.

It belongs to the FGGY kinase family.

It carries out the reaction glycerol + ATP = sn-glycerol 3-phosphate + ADP + H(+). Its pathway is polyol metabolism; glycerol degradation via glycerol kinase pathway; sn-glycerol 3-phosphate from glycerol: step 1/1. Its activity is regulated as follows. Inhibited by fructose 1,6-bisphosphate (FBP). Functionally, key enzyme in the regulation of glycerol uptake and metabolism. Catalyzes the phosphorylation of glycerol to yield sn-glycerol 3-phosphate. This is Glycerol kinase from Burkholderia ambifaria (strain ATCC BAA-244 / DSM 16087 / CCUG 44356 / LMG 19182 / AMMD) (Burkholderia cepacia (strain AMMD)).